The sequence spans 40 residues: Alpha-conotoxin-like Qc1.1c (40 aa).

Positions 1 to 19 (SDGRNTAANDKASNLMALR) are excised as a propeptide. Intrachain disulfides connect Cys-22–Cys-28 and Cys-23–Cys-36. The tract at residues 24-26 (PNP) is lacks the Ser-Xaa-Pro motif that is crucial for potent interaction with nAChR.

The protein belongs to the conotoxin A superfamily. As to expression, expressed by the venom duct.

The protein resides in the secreted. Functionally, alpha-conotoxins act on postsynaptic membranes, they bind to the nicotinic acetylcholine receptors (nAChR) and thus inhibit them. Has possibly a distinct nAChR binding mode from other alpha-conotoxins, due to a different three residue motif (lacks the Ser-Xaa-Pro motif). The protein is Alpha-conotoxin-like Qc1.1c of Conus quercinus (Oak cone).